Consider the following 84-residue polypeptide: Exodeoxyribonuclease 7 small subunit (84 aa).

Belongs to the XseB family. In terms of assembly, heterooligomer composed of large and small subunits.

The protein resides in the cytoplasm. The enzyme catalyses Exonucleolytic cleavage in either 5'- to 3'- or 3'- to 5'-direction to yield nucleoside 5'-phosphates.. Functionally, bidirectionally degrades single-stranded DNA into large acid-insoluble oligonucleotides, which are then degraded further into small acid-soluble oligonucleotides. The protein is Exodeoxyribonuclease 7 small subunit of Bartonella henselae (strain ATCC 49882 / DSM 28221 / CCUG 30454 / Houston 1) (Rochalimaea henselae).